Here is a 1485-residue protein sequence, read N- to C-terminus: Cystic fibrosis transmembrane conductance regulator (1485 aa).

Residues 1–78 are Cytoplasmic-facing; sequence MQKTPLEKAS…KLINALKRCF (78 aa). The chain crosses the membrane as a helical span at residues 79–99; it reads FWKFLFYGILLYLGEVTKAVQ. Residues 82–366 form the ABC transmembrane type-1 1 domain; sequence FLFYGILLYL…WAVQTWYDSL (285 aa). Residues 100 to 123 lie on the Extracellular side of the membrane; sequence PLLLGRIIASYDRDNEHERSIAYY. The chain crosses the membrane as a helical span at residues 124–147; that stretch reads LAIGLCLLFVVRMLLLHPAIFGLH. Topologically, residues 148–196 are cytoplasmic; the sequence is HIGMQMRIAMFSLIYKKTLKLSSKVLDKISTGQLVSLLSNNLNKFDEGL. The helical transmembrane segment at 197–217 threads the bilayer; the sequence is ALAHFVWIAPLQVLLLMGLLW. Residues 218–223 lie on the Extracellular side of the membrane; the sequence is DLLQAS. A helical transmembrane segment spans residues 224-244; the sequence is AFCGLGFLIILSLFQARLGRM. Residues 245–299 lie on the Cytoplasmic side of the membrane; that stretch reads MMKYKDKRAGKINERLVITSQIIENIQSVKAYCWENAMEKIIETIRETELKLTRK. The helical transmembrane segment at 300-320 threads the bilayer; the sequence is AAYVRYFNSSAFFFSGFFVVF. The Extracellular portion of the chain corresponds to 321 to 340; sequence LSIVPHLLLDGISLRKIFTT. A helical membrane pass occupies residues 341–359; sequence ISFSIVLRMAVTRQFPWAV. The Cytoplasmic portion of the chain corresponds to 360-860; sequence QTWYDSLGVI…YLRFLTAHKN (501 aa). Residues tryptophan 402, serine 435, 459-466, and glutamine 494 each bind ATP; that span reads GSTGAGKT. The region spanning 422 to 647 is the ABC transporter 1 domain; sequence ISNEDPSAFF…RPEFSSHLIG (226 aa). Residues 652-833 form a disordered R region region; it reads NAERRNSIIT…EEINEEDLKE (182 aa). Residues 750 to 760 show a composition bias toward polar residues; it reads PRSNFLNTGPT. Residues 861-881 traverse the membrane as a helical segment; that stretch reads FIFILVFCLVIFFVEVAASSA. Positions 880–1163 constitute an ABC transmembrane type-1 2 domain; sequence SAWLWIIKRN…ASIDVDSLMR (284 aa). Residues 882-923 lie on the Extracellular side of the membrane; that stretch reads WLWIIKRNAPAINMTSNENVSEVSDTLSVIVTHTSFYYVFYI. N-linked (GlcNAc...) asparagine glycans are attached at residues asparagine 894 and asparagine 900. Residues 924–944 traverse the membrane as a discontinuously helical segment; it reads YVGVADSLLALGIFRGLPLVH. Residues 945 to 995 are Cytoplasmic-facing; that stretch reads SLISVSKVLHKKMLHAILHAPMSTFNTMRAGRILNRFSKDTAILDDILPLS. Residues 996–1016 traverse the membrane as a helical segment; it reads IFDLTQLVLIVIGAITVVSLL. The Extracellular portion of the chain corresponds to 1017-1018; sequence EP. Residues 1019-1039 traverse the membrane as a helical segment; that stretch reads YIFLATVPVIVAFILLRSYFL. Over 1040-1100 the chain is Cytoplasmic; that stretch reads HTSQQLKQLE…TANWFLYLST (61 aa). A helical transmembrane segment spans residues 1101–1121; that stretch reads LRWFQMTIEMIFVIFFIAVSF. Over 1122-1135 the chain is Extracellular; that stretch reads ISIATSGAGEEKVG. A helical membrane pass occupies residues 1136-1156; that stretch reads IVLTLAMNIMNTLQWAVNASI. At 1157–1485 the chain is on the cytoplasmic side; sequence DVDSLMRSVS…TEEEVQDTRL (329 aa). The ABC transporter 2 domain occupies 1213-1446; sequence MTVKNLSANY…KSFFKQAISH (234 aa). ATP contacts are provided by residues tyrosine 1222 and 1247–1254; that span reads GRTGSGKS. The disordered stretch occupies residues 1458 to 1485; sequence RNSSKRKSRPQISALQEETEEEVQDTRL. A compositionally biased stretch (acidic residues) spans 1474–1485; the sequence is EETEEEVQDTRL. A PDZ-binding motif is present at residues 1483 to 1485; sequence TRL.

The protein belongs to the ABC transporter superfamily. ABCC family. CFTR transporter (TC 3.A.1.202) subfamily. In terms of assembly, monomer; does not require oligomerization for channel activity. May form oligomers in the membrane. In terms of processing, phosphorylated; cAMP treatment promotes phosphorylation and activates the channel. Dephosphorylation decreases the ATPase activity (in vitro). Phosphorylation at PKA sites activates the channel. Phosphorylation at PKC sites enhances the response to phosphorylation by PKA.

It localises to the apical cell membrane. It is found in the early endosome membrane. Its subcellular location is the cell membrane. The protein localises to the recycling endosome membrane. The protein resides in the endoplasmic reticulum membrane. The catalysed reaction is ATP + H2O + closed Cl(-) channel = ADP + phosphate + open Cl(-) channel.. It catalyses the reaction chloride(in) = chloride(out). The enzyme catalyses hydrogencarbonate(in) = hydrogencarbonate(out). It carries out the reaction ATP + H2O = ADP + phosphate + H(+). Its function is as follows. Epithelial ion channel that plays an important role in the regulation of epithelial ion and water transport and fluid homeostasis. Mediates the transport of chloride ions across the cell membrane. Possesses an intrinsic ATPase activity and utilizes ATP to gate its channel; the passive flow of anions through the channel is gated by cycles of ATP binding and hydrolysis by the ATP-binding domains. The ion channel is also permeable to HCO(3)(-); selectivity depends on the extracellular chloride concentration. Exerts its function also by modulating the activity of other ion channels and transporters. Contributes to the regulation of the pH and the ion content of the epithelial fluid layer. The polypeptide is Cystic fibrosis transmembrane conductance regulator (Xenopus laevis (African clawed frog)).